Consider the following 597-residue polypeptide: C4b-binding protein alpha chain (597 aa).

Residues 1-48 (MHPPKTPSGALHRKRKMAAWPFSRLWKVSDPILFQMTLIAALLPAVLG) form the signal peptide. Sushi domains are found at residues 49–110 (NCGP…FCIY), 111–172 (KRCR…QCEI), 173–236 (VKCK…TCEK), 237–296 (ITCR…ACEP), 297–362 (NSCI…GCEA), 363–424 (LCCP…SCGD), 425–482 (ICNF…QCKA), and 483–540 (LCRK…KCEW). Intrachain disulfides connect cysteine 50–cysteine 96, cysteine 81–cysteine 108, cysteine 113–cysteine 154, cysteine 140–cysteine 170, cysteine 175–cysteine 217, cysteine 203–cysteine 234, cysteine 239–cysteine 281, cysteine 267–cysteine 294, cysteine 299–cysteine 348, cysteine 332–cysteine 360, cysteine 365–cysteine 409, cysteine 399–cysteine 422, cysteine 426–cysteine 468, cysteine 454–cysteine 480, cysteine 484–cysteine 525, and cysteine 511–cysteine 538. The N-linked (GlcNAc...) asparagine glycan is linked to asparagine 221. Residues asparagine 506 and asparagine 528 are each glycosylated (N-linked (GlcNAc...) asparagine).

Disulfide-linked complex of alpha and beta chains of 3 possible sorts: a 570 kDa complex of 7 alpha chains and 1 beta chain, a 530 kDa homoheptamer of alpha chains or a 500 kDa complex of 6 alpha chains and 1 beta chain. The central body of the alpha chain homomer supports tentacles, each with the binding site for C4b at the end. In terms of assembly, (Microbial infection) Interacts with Staphylococcus aureus protein SdrE; this interaction inhibits complement-mediated bacterial opsonization. In terms of tissue distribution, chylomicrons in the plasma.

Its subcellular location is the secreted. In terms of biological role, controls the classical pathway of complement activation. It binds as a cofactor to C3b/C4b inactivator (C3bINA), which then hydrolyzes the complement fragment C4b. It also accelerates the degradation of the C4bC2a complex (C3 convertase) by dissociating the complement fragment C2a. Alpha chain binds C4b. It also interacts with anticoagulant protein S and with serum amyloid P component. The protein is C4b-binding protein alpha chain (C4BPA) of Homo sapiens (Human).